Here is a 367-residue protein sequence, read N- to C-terminus: Peptide chain release factor 2 (367 aa).

Glutamine 247 carries the N5-methylglutamine modification.

This sequence belongs to the prokaryotic/mitochondrial release factor family. Post-translationally, methylated by PrmC. Methylation increases the termination efficiency of RF2.

The protein resides in the cytoplasm. Its function is as follows. Peptide chain release factor 2 directs the termination of translation in response to the peptide chain termination codons UGA and UAA. This is Peptide chain release factor 2 from Caulobacter sp. (strain K31).